We begin with the raw amino-acid sequence, 306 residues long: Tryptophan 2,3-dioxygenase (306 aa).

The interval 1–29 is disordered; that stretch reads MQPPGDDAAPRCPFAGAHAPDAPHVPEAA. Substrate is bound by residues 75-79, Y137, and R141; that span reads FIIQH. H264 is a binding site for heme. Position 278 (T278) interacts with substrate.

Belongs to the tryptophan 2,3-dioxygenase family. Homotetramer. The cofactor is heme.

It catalyses the reaction L-tryptophan + O2 = N-formyl-L-kynurenine. Its pathway is amino-acid degradation; L-tryptophan degradation via kynurenine pathway; L-kynurenine from L-tryptophan: step 1/2. In terms of biological role, heme-dependent dioxygenase that catalyzes the oxidative cleavage of the L-tryptophan (L-Trp) pyrrole ring and converts L-tryptophan to N-formyl-L-kynurenine. Catalyzes the oxidative cleavage of the indole moiety. The sequence is that of Tryptophan 2,3-dioxygenase from Burkholderia mallei (strain NCTC 10247).